Here is a 235-residue protein sequence, read N- to C-terminus: Rab-like protein 3 (235 aa).

A small GTPase-like region spans residues 1 to 235; sequence MASLDRVKVL…GGNFKSLHYD (235 aa). Residues 16-21, 148-150, and 179-180 contribute to the GTP site; these read GVGKSS, KLD, and DC.

It belongs to the small GTPase superfamily. Rab family. As to quaternary structure, homodimer.

In terms of biological role, required for KRAS signaling regulation and modulation of cell proliferation. Regulator of KRAS prenylation, and probably prenylation of other small GTPases. Required for lymphocyte development and function. Not required for myeloid cell development. This chain is Rab-like protein 3 (rabl3), found in Xenopus tropicalis (Western clawed frog).